Reading from the N-terminus, the 492-residue chain is Probable proline dehydrogenase, mitochondrial (492 aa).

This sequence belongs to the proline oxidase family. It depends on FAD as a cofactor.

It is found in the mitochondrion. It catalyses the reaction L-proline + a quinone = (S)-1-pyrroline-5-carboxylate + a quinol + H(+). In terms of biological role, converts proline to delta-1-pyrroline-5-carboxylate. This chain is Probable proline dehydrogenase, mitochondrial, found in Schizosaccharomyces pombe (strain 972 / ATCC 24843) (Fission yeast).